Reading from the N-terminus, the 273-residue chain is Dermonecrotic toxin LspiSicTox-betaIE1i (273 aa).

Mg(2+)-binding residues include E25 and D27. H41 acts as the Nucleophile in catalysis. A disulfide bridge connects residues C45 and C51. Mg(2+) is bound at residue D85.

It belongs to the arthropod phospholipase D family. Class I subfamily. Mg(2+) serves as cofactor. Expressed by the venom gland.

The protein resides in the secreted. It catalyses the reaction an N-(acyl)-sphingosylphosphocholine = an N-(acyl)-sphingosyl-1,3-cyclic phosphate + choline. The catalysed reaction is an N-(acyl)-sphingosylphosphoethanolamine = an N-(acyl)-sphingosyl-1,3-cyclic phosphate + ethanolamine. The enzyme catalyses a 1-acyl-sn-glycero-3-phosphocholine = a 1-acyl-sn-glycero-2,3-cyclic phosphate + choline. It carries out the reaction a 1-acyl-sn-glycero-3-phosphoethanolamine = a 1-acyl-sn-glycero-2,3-cyclic phosphate + ethanolamine. Dermonecrotic toxins cleave the phosphodiester linkage between the phosphate and headgroup of certain phospholipids (sphingolipid and lysolipid substrates), forming an alcohol (often choline) and a cyclic phosphate. This toxin acts on sphingomyelin (SM). It may also act on ceramide phosphoethanolamine (CPE), lysophosphatidylcholine (LPC) and lysophosphatidylethanolamine (LPE), but not on lysophosphatidylserine (LPS), and lysophosphatidylglycerol (LPG). It acts by transphosphatidylation, releasing exclusively cyclic phosphate products as second products. Induces dermonecrosis, hemolysis, increased vascular permeability, edema, inflammatory response, and platelet aggregation. The polypeptide is Dermonecrotic toxin LspiSicTox-betaIE1i (Loxosceles spinulosa (Recluse spider)).